Reading from the N-terminus, the 230-residue chain is MRNLPIIALDFKSADEVHTFLNKFNEPLCVKIGMELFYQTGPALIKSIKKRGHDIFLDLKLHDIPNTVSKAMEGLARLDIDLVNVHAAGGIKMMEEAKKGLRKHNADIKIIAVTQLTSTTERQLHEEQNIQTSIEEAVLNYARLTKKAGLDGVVCSPLEAKMISKELGSDFLKVTPGIRPKGAARNDQQRITTPEEAKTLGSTHIVVGRPITQSEHPIDSYHKIKESWLS.

Substrate is bound by residues Asp10, Lys31, 58 to 67, Thr117, Arg179, Gln188, Gly208, and Arg209; that span reads DLKLHDIPNT. The Proton donor role is filled by Lys60.

The protein belongs to the OMP decarboxylase family. Type 1 subfamily. In terms of assembly, homodimer.

The enzyme catalyses orotidine 5'-phosphate + H(+) = UMP + CO2. Its pathway is pyrimidine metabolism; UMP biosynthesis via de novo pathway; UMP from orotate: step 2/2. Catalyzes the decarboxylation of orotidine 5'-monophosphate (OMP) to uridine 5'-monophosphate (UMP). This chain is Orotidine 5'-phosphate decarboxylase, found in Staphylococcus epidermidis (strain ATCC 35984 / DSM 28319 / BCRC 17069 / CCUG 31568 / BM 3577 / RP62A).